Reading from the N-terminus, the 327-residue chain is Malate dehydrogenase (327 aa).

An NAD(+)-binding site is contributed by 12–18 (GAAGQIG). 2 residues coordinate substrate: R93 and R99. NAD(+) contacts are provided by residues N106, Q113, and 130–132 (VGN). Substrate contacts are provided by N132 and R163. H188 serves as the catalytic Proton acceptor.

The protein belongs to the LDH/MDH superfamily. MDH type 2 family.

It catalyses the reaction (S)-malate + NAD(+) = oxaloacetate + NADH + H(+). In terms of biological role, catalyzes the reversible oxidation of malate to oxaloacetate. In Cupriavidus metallidurans (strain ATCC 43123 / DSM 2839 / NBRC 102507 / CH34) (Ralstonia metallidurans), this protein is Malate dehydrogenase.